We begin with the raw amino-acid sequence, 420 residues long: Dynein axonemal assembly factor 4 (420 aa).

Residues 3 to 87 form the CS domain; sequence VRVSEFSWQQ…KEPVLWESLS (85 aa). The segment at 7–103 is mediates interaction with ESR1 and STUB1; that stretch reads EFSWQQTPAA…EMMQRIREKS (97 aa). A compositionally biased stretch (basic and acidic residues) spans 165 to 192; that stretch reads CQKKADGQKRVQRKEKPLQGKQAEERGA. Positions 165–212 are disordered; it reads CQKKADGQKRVQRKEKPLQGKQAEERGALKPQSLPRKAPPTRLPTRGR. 3 TPR repeats span residues 288–321, 323–355, and 364–397; these read PDWL…NRKI, VLYL…LTPP, and MKAH…DPAN.

Interacts with ZMYND10. Interacts with STUB1. Interacts with ESR1 and ESR2. Interacts with DNAAF2. Interacts with CCT3, CCT4, CCT5 and CCT8. Interacts with DNAAF6/PIH1D3.

Its subcellular location is the nucleus. The protein localises to the cytoplasm. The protein resides in the cell projection. It localises to the neuron projection. It is found in the dynein axonemal particle. Its function is as follows. Involved in neuronal migration during development of the cerebral neocortex. May regulate the stability and proteasomal degradation of the estrogen receptors that play an important role in neuronal differentiation, survival and plasticity. Axonemal dynein assembly factor required for ciliary motility. This Rattus norvegicus (Rat) protein is Dynein axonemal assembly factor 4.